The primary structure comprises 123 residues: Immunoglobulin heavy variable 4-34 (123 aa).

The N-terminal stretch at 1–26 is a signal peptide; it reads MDLLHKNMKHLWFFLLLVAAPRWVLS. Residues 26–123 are v region; sequence SQVQLQQWGA…ADTAVYYCAR (98 aa). The framework-1 stretch occupies residues 27 to 51; it reads QVQLQQWGAGLLKPSETLSLTCAVY. The Ig-like domain occupies 27-123; sequence QVQLQQWGAG…ADTAVYYCAR (97 aa). The cysteines at positions 48 and 121 are disulfide-linked. The segment at 52-59 is complementarity-determining-1; that stretch reads GGSFSGYY. The framework-2 stretch occupies residues 60-76; the sequence is WSWIRQPPGKGLEWIGE. Residues 77-83 form a complementarity-determining-2 region; it reads INHSGST. An N-linked (GlcNAc...) asparagine glycan is attached at asparagine 78. The interval 84–121 is framework-3; sequence NYNPSLKSRVTISVDTSKNQFSLKLSSVTAADTAVYYC. The interval 122–123 is complementarity-determining-3; the sequence is AR.

Immunoglobulins are composed of two identical heavy chains and two identical light chains; disulfide-linked.

Its subcellular location is the secreted. It localises to the cell membrane. V region of the variable domain of immunoglobulin heavy chains that participates in the antigen recognition. Immunoglobulins, also known as antibodies, are membrane-bound or secreted glycoproteins produced by B lymphocytes. In the recognition phase of humoral immunity, the membrane-bound immunoglobulins serve as receptors which, upon binding of a specific antigen, trigger the clonal expansion and differentiation of B lymphocytes into immunoglobulins-secreting plasma cells. Secreted immunoglobulins mediate the effector phase of humoral immunity, which results in the elimination of bound antigens. The antigen binding site is formed by the variable domain of one heavy chain, together with that of its associated light chain. Thus, each immunoglobulin has two antigen binding sites with remarkable affinity for a particular antigen. The variable domains are assembled by a process called V-(D)-J rearrangement and can then be subjected to somatic hypermutations which, after exposure to antigen and selection, allow affinity maturation for a particular antigen. In Homo sapiens (Human), this protein is Immunoglobulin heavy variable 4-34.